Consider the following 252-residue polypeptide: Phosphoglycolate phosphatase (252 aa).

The active-site Nucleophile is the Asp-13. Positions 13, 15, and 192 each coordinate Mg(2+).

The protein belongs to the HAD-like hydrolase superfamily. CbbY/CbbZ/Gph/YieH family. In terms of assembly, monomer. It depends on Mg(2+) as a cofactor. The cofactor is chloride.

It carries out the reaction 2-phosphoglycolate + H2O = glycolate + phosphate. Its pathway is organic acid metabolism; glycolate biosynthesis; glycolate from 2-phosphoglycolate: step 1/1. Functionally, specifically catalyzes the dephosphorylation of 2-phosphoglycolate. Is involved in the dissimilation of the intracellular 2-phosphoglycolate formed during the DNA repair of 3'-phosphoglycolate ends, a major class of DNA lesions induced by oxidative stress. This Shigella dysenteriae serotype 1 (strain Sd197) protein is Phosphoglycolate phosphatase.